The following is an 899-amino-acid chain: Putative lipoxygenase 5 (899 aa).

Disordered stretches follow at residues 15-34 (AGSRGMGKGASRRRTARSTA), 48-68 (APVEQQRGAGRPEAHPQSVAA), and 258-291 (VASARPVLGGEQMPYPRRMRTGRPSTATDASAES). One can recognise a PLAT domain in the interval 68–204 (ARAVVTVRRR…VSRDRRVFFS (137 aa)). The Lipoxygenase domain maps to 207–899 (PYLPSETPPG…CRGVPNSVTI (693 aa)). His559, His564, His751, Asn755, and Ile899 together coordinate Fe cation.

The protein belongs to the lipoxygenase family. Requires Fe cation as cofactor.

The catalysed reaction is (9Z,12Z)-octadecadienoate + O2 = (13S)-hydroperoxy-(9Z,11E)-octadecadienoate. It carries out the reaction (9Z,12Z,15Z)-octadecatrienoate + O2 = (13S)-hydroperoxy-(9Z,11E,15Z)-octadecatrienoate. It functions in the pathway lipid metabolism; oxylipin biosynthesis. Its function is as follows. Plant lipoxygenase may be involved in a number of diverse aspects of plant physiology including growth and development, pest resistance, and senescence or responses to wounding. Catalyzes the hydroperoxidation of lipids containing a cis,cis-1,4-pentadiene structure. The polypeptide is Putative lipoxygenase 5 (Oryza sativa subsp. japonica (Rice)).